Consider the following 130-residue polypeptide: MYKAETRGITVTVEPRFVEEESSPGESRYFFAYTVEIVNNGSEQVQLRSRHWRIIDGRGACQEVRGAGVVGKQPVLEPGESFSYTSGCPLTTPDGLMAGSYTMSTVGGESFEAEIPAFSLDSPHLRRVVH.

One can recognise an ApaG domain in the interval 3–127; the sequence is KAETRGITVT…FSLDSPHLRR (125 aa).

The sequence is that of Protein ApaG from Methylorubrum populi (strain ATCC BAA-705 / NCIMB 13946 / BJ001) (Methylobacterium populi).